The sequence spans 176 residues: NAD(P)H-quinone oxidoreductase subunit 6, chloroplastic (176 aa).

5 helical membrane-spanning segments follow: residues 10 to 30 (FLLVFLGSGLLVGGLGVVLLP), 32 to 52 (PIFSAFSLGFVLVCISLLYIL), 61 to 81 (AQLLIYVGAINVLIIFAVMFM), 92 to 112 (LWTVGNGITSLVCTTILFLLM), and 152 to 172 (FFLPFELISIILLVALIGAIS).

Belongs to the complex I subunit 6 family. As to quaternary structure, NDH is composed of at least 16 different subunits, 5 of which are encoded in the nucleus.

It localises to the plastid. It is found in the chloroplast thylakoid membrane. The catalysed reaction is a plastoquinone + NADH + (n+1) H(+)(in) = a plastoquinol + NAD(+) + n H(+)(out). The enzyme catalyses a plastoquinone + NADPH + (n+1) H(+)(in) = a plastoquinol + NADP(+) + n H(+)(out). NDH shuttles electrons from NAD(P)H:plastoquinone, via FMN and iron-sulfur (Fe-S) centers, to quinones in the photosynthetic chain and possibly in a chloroplast respiratory chain. The immediate electron acceptor for the enzyme in this species is believed to be plastoquinone. Couples the redox reaction to proton translocation, and thus conserves the redox energy in a proton gradient. The polypeptide is NAD(P)H-quinone oxidoreductase subunit 6, chloroplastic (ndhG) (Capsella bursa-pastoris (Shepherd's purse)).